The primary structure comprises 391 residues: Succinate--CoA ligase [ADP-forming] subunit beta (391 aa).

Positions 9 to 247 (KDILAKYGVA…IAEEDPLEVE (239 aa)) constitute an ATP-grasp domain. Residues Lys49, 56 to 58 (GRG), Glu102, Ala105, and Glu110 contribute to the ATP site. Residues Asn202 and Asp216 each contribute to the Mg(2+) site. Residues Asn267 and 324-326 (GIL) each bind substrate.

The protein belongs to the succinate/malate CoA ligase beta subunit family. Heterotetramer of two alpha and two beta subunits. Mg(2+) serves as cofactor.

It catalyses the reaction succinate + ATP + CoA = succinyl-CoA + ADP + phosphate. The catalysed reaction is GTP + succinate + CoA = succinyl-CoA + GDP + phosphate. The protein operates within carbohydrate metabolism; tricarboxylic acid cycle; succinate from succinyl-CoA (ligase route): step 1/1. Functionally, succinyl-CoA synthetase functions in the citric acid cycle (TCA), coupling the hydrolysis of succinyl-CoA to the synthesis of either ATP or GTP and thus represents the only step of substrate-level phosphorylation in the TCA. The beta subunit provides nucleotide specificity of the enzyme and binds the substrate succinate, while the binding sites for coenzyme A and phosphate are found in the alpha subunit. The polypeptide is Succinate--CoA ligase [ADP-forming] subunit beta (Acidobacterium capsulatum (strain ATCC 51196 / DSM 11244 / BCRC 80197 / JCM 7670 / NBRC 15755 / NCIMB 13165 / 161)).